A 534-amino-acid polypeptide reads, in one-letter code: Fimbrial subunit type 2 (534 aa).

The first 32 residues, 1–32, serve as a signal peptide directing secretion; sequence MKYNTSTLGRRAAAAAGVLTLAVLGLAPMAQA. Disordered stretches follow at residues 56 to 76 and 329 to 376; these read GDGN…GKGA and TYAE…DKDG. Residues 334–347 show a composition bias toward pro residues; the sequence is PPAPETPPANPDNP. The span at 361-376 shows a compositional bias: basic and acidic residues; it reads TIKKVDGNDRSGDKDG. Positions 492 to 496 match the LPXTG sorting signal motif; it reads LPLTG. Thr495 carries the pentaglycyl murein peptidoglycan amidated threonine modification. The propeptide at 496–534 is removed by sortase; it reads GANGMLILTASGAALLMIAVGSVLVARYRERKRNRDLAA.

It localises to the secreted. The protein localises to the cell wall. Its subcellular location is the fimbrium. Functionally, major fimbrial subunit of A.naeslundii. The sequence is that of Fimbrial subunit type 2 from Actinomyces naeslundii.